The primary structure comprises 78 residues: DNA gyrase inhibitor YacG (78 aa).

Cys-7, Cys-10, Cys-26, and Cys-30 together coordinate Zn(2+).

The protein belongs to the DNA gyrase inhibitor YacG family. As to quaternary structure, interacts with GyrB. Requires Zn(2+) as cofactor.

Functionally, inhibits all the catalytic activities of DNA gyrase by preventing its interaction with DNA. Acts by binding directly to the C-terminal domain of GyrB, which probably disrupts DNA binding by the gyrase. The sequence is that of DNA gyrase inhibitor YacG from Colwellia psychrerythraea (strain 34H / ATCC BAA-681) (Vibrio psychroerythus).